An 873-amino-acid chain; its full sequence is Alanine--tRNA ligase (873 aa).

The Zn(2+) site is built by H562, H566, C663, and H667.

This sequence belongs to the class-II aminoacyl-tRNA synthetase family. Requires Zn(2+) as cofactor.

The protein localises to the cytoplasm. It carries out the reaction tRNA(Ala) + L-alanine + ATP = L-alanyl-tRNA(Ala) + AMP + diphosphate. Its function is as follows. Catalyzes the attachment of alanine to tRNA(Ala) in a two-step reaction: alanine is first activated by ATP to form Ala-AMP and then transferred to the acceptor end of tRNA(Ala). Also edits incorrectly charged Ser-tRNA(Ala) and Gly-tRNA(Ala) via its editing domain. The sequence is that of Alanine--tRNA ligase from Bordetella avium (strain 197N).